A 444-amino-acid polypeptide reads, in one-letter code: uncharacterized protein (444 aa).

Positions Met1–Arg11 are enriched in basic and acidic residues. Positions Met1–Pro35 are disordered.

This is an uncharacterized protein from Caenorhabditis elegans.